We begin with the raw amino-acid sequence, 329 residues long: tRNA(Ile)-lysidine synthase (329 aa).

37-42 contributes to the ATP binding site; that stretch reads SGGSDS.

Belongs to the tRNA(Ile)-lysidine synthase family.

The protein resides in the cytoplasm. It catalyses the reaction cytidine(34) in tRNA(Ile2) + L-lysine + ATP = lysidine(34) in tRNA(Ile2) + AMP + diphosphate + H(+). Ligates lysine onto the cytidine present at position 34 of the AUA codon-specific tRNA(Ile) that contains the anticodon CAU, in an ATP-dependent manner. Cytidine is converted to lysidine, thus changing the amino acid specificity of the tRNA from methionine to isoleucine. This is tRNA(Ile)-lysidine synthase from Zymomonas mobilis subsp. mobilis (strain ATCC 31821 / ZM4 / CP4).